We begin with the raw amino-acid sequence, 1064 residues long: Probable ATP-dependent DNA helicase CHR23 (1064 aa).

Residues 398–563 (VSLYNNDYNG…WSLLNFLLPH (166 aa)) enclose the Helicase ATP-binding domain. An ATP-binding site is contributed by 411-418 (DEMGLGKT). The short motif at 513–516 (DEGH) is the DEAH box element. The Helicase C-terminal domain occupies 699–866 (LLDRLLPKLK…DRREMLEEIM (168 aa)). Disordered stretches follow at residues 924-955 (AYTS…AVYS) and 967-1064 (MESE…SKRN). Residues 1002–1014 (ESDEEKEEEEEER) show a composition bias toward acidic residues. The span at 1048–1064 (SSPNSRGKGSSKGSKRN) shows a compositional bias: low complexity.

Belongs to the helicase family. In terms of tissue distribution, expressed in embryos, root apical meristem (RAM) and shoot apical meristem (SAM).

It is found in the nucleus. It catalyses the reaction ATP + H2O = ADP + phosphate + H(+). Probable chromatin-remodeling factor that is functionally redundant with CHR12 in root and shoot stem cell initiation and root apical meristem (RAM) and shoot apical meristem (SAM) maintenance. Can associate with the promoter region of WOX5. May promote seed maturation and repress initiation of germination. May repress plant growth. This chain is Probable ATP-dependent DNA helicase CHR23, found in Arabidopsis thaliana (Mouse-ear cress).